Here is a 938-residue protein sequence, read N- to C-terminus: Isoleucine--tRNA ligase (938 aa).

A 'HIGH' region motif is present at residues 58–68 (PYANGSIHIGH). The residue at position 183 (lysine 183) is an N6-acetyllysine. Glutamate 561 contacts L-isoleucyl-5'-AMP. The 'KMSKS' region signature appears at 602 to 606 (KMSKS). Lysine 605 contributes to the ATP binding site. Residues cysteine 901, cysteine 904, cysteine 921, and cysteine 924 each coordinate Zn(2+).

Belongs to the class-I aminoacyl-tRNA synthetase family. IleS type 1 subfamily. As to quaternary structure, monomer. Zn(2+) serves as cofactor.

It is found in the cytoplasm. The catalysed reaction is tRNA(Ile) + L-isoleucine + ATP = L-isoleucyl-tRNA(Ile) + AMP + diphosphate. Functionally, catalyzes the attachment of isoleucine to tRNA(Ile). As IleRS can inadvertently accommodate and process structurally similar amino acids such as valine, to avoid such errors it has two additional distinct tRNA(Ile)-dependent editing activities. One activity is designated as 'pretransfer' editing and involves the hydrolysis of activated Val-AMP. The other activity is designated 'posttransfer' editing and involves deacylation of mischarged Val-tRNA(Ile). In Escherichia coli (strain ATCC 8739 / DSM 1576 / NBRC 3972 / NCIMB 8545 / WDCM 00012 / Crooks), this protein is Isoleucine--tRNA ligase.